The sequence spans 527 residues: T-complex protein 1 subunit beta (527 aa).

An N-acetylserine modification is found at Ser2.

It belongs to the TCP-1 chaperonin family. In terms of assembly, heterooligomeric complex of about 850 to 900 kDa that forms two stacked rings, 12 to 16 nm in diameter. Interacts with PLP2; this interaction leads to inhibition of CCT complex mediated actin folding.

The protein resides in the cytoplasm. Functionally, molecular chaperone; assists the folding of proteins upon ATP hydrolysis. Known to play a role, in vitro, in the folding of actin and tubulin. In yeast may play a role in mitotic spindle formation. The chain is T-complex protein 1 subunit beta (CCT2) from Saccharomyces cerevisiae (strain ATCC 204508 / S288c) (Baker's yeast).